Consider the following 136-residue polypeptide: Large ribosomal subunit protein uL16c (136 aa).

Belongs to the universal ribosomal protein uL16 family. Part of the 50S ribosomal subunit.

Its subcellular location is the plastid. It is found in the chloroplast. This chain is Large ribosomal subunit protein uL16c, found in Mesostigma viride (Green alga).